Consider the following 418-residue polypeptide: MKVLVLGAGVAGVSSAWYLAEAGHEVTVIDRAEGVAMETSFANAGQLSYGYTTPWAAPGIPTKALKWLFKSHPPLLFRPDGSLYQIEWLWQMLQHCTAARYQINKERMVRMSEYSREMFRRFEAQTGMNFEGRKKGTLQIFRQTKEVEAAKQDIAVLERYGVPYRRLKPEECAEFEPALARVTAKIAGGLHLPADATGDCRLFTENLYKLCQEKGVRFHFNQTISRIDHNGLRIKTVETETGRFEADAVVCALGCFSRTVLAQVDLNLPIYPVKGYSLTLPVTNSDGAPVSTVLDESYKVAITRFNNRIRVGGMAELSGYAIKLPEKRRETLALVVNDLFPEGGDLNQTLFWSGLRPMTPDSTPLIGRTRFDNLFLNTGHGTLGWTMSLGSAKLTADIVSGKDTEIRSDDLSLSRYQA.

3-17 is an FAD binding site; sequence VLVLGAGVAGVSSAW.

The protein belongs to the DadA oxidoreductase family. The cofactor is FAD.

The enzyme catalyses a D-alpha-amino acid + A + H2O = a 2-oxocarboxylate + AH2 + NH4(+). Its function is as follows. Oxidative deamination of D-amino acids. This chain is D-amino acid dehydrogenase, found in Neisseria meningitidis serogroup A / serotype 4A (strain DSM 15465 / Z2491).